Reading from the N-terminus, the 311-residue chain is Porphobilinogen deaminase (311 aa).

Cys241 carries the S-(dipyrrolylmethanemethyl)cysteine modification.

It belongs to the HMBS family. As to quaternary structure, monomer. It depends on dipyrromethane as a cofactor.

It catalyses the reaction 4 porphobilinogen + H2O = hydroxymethylbilane + 4 NH4(+). It participates in porphyrin-containing compound metabolism; protoporphyrin-IX biosynthesis; coproporphyrinogen-III from 5-aminolevulinate: step 2/4. Functionally, tetrapolymerization of the monopyrrole PBG into the hydroxymethylbilane pre-uroporphyrinogen in several discrete steps. In Shouchella clausii (strain KSM-K16) (Alkalihalobacillus clausii), this protein is Porphobilinogen deaminase.